Consider the following 418-residue polypeptide: 6-methylpretetramide 4-monooxygenase (418 aa).

FAD is bound by residues 15-44 (DVCV…LVER) and 289-299 (WARDGLLLIGD).

It belongs to the PheA/TfdB FAD monooxygenase family. FAD is required as a cofactor.

It carries out the reaction 6-methylpretetramide + NADPH + O2 + 2 H(+) = 4-hydroxy-6-methylpretetramide + NADP(+) + H2O. It participates in antibiotic biosynthesis; oxytetracycline biosynthesis. Its function is as follows. Involved in the biosynthesis of the tetracycline antibiotic, oxytetracycline. Catalyzes the C-4 hydroxylation of 6-methylpretetramide to yield the intermediate 4-hydroxyl-6-methylpretetramid, which is subsequently hydroxylated by OxyL to yield 4-keto-anhydrotetracycline. OxyE serves as the ancillary enzyme to assist OxyL in the hydroxylation of C-4. The chain is 6-methylpretetramide 4-monooxygenase from Streptomyces rimosus.